The primary structure comprises 393 residues: Nucleosome assembly protein 1-like 1 (393 aa).

Positions 1–10 are enriched in basic and acidic residues; sequence MANIDNKEQT. Disordered stretches follow at residues 1 to 36 and 132 to 165; these read MANIDNKEQTELDQQDMEDVEDIEEEEAGEDANSKA and ECEWKVDEEEDISGDLKDKAKLEEEKKDEEKEDP. 2 stretches are compositionally biased toward acidic residues: residues 11 to 30 and 132 to 144; these read ELDQQDMEDVEDIEEEEAGE and ECEWKVDEEEDIS. The short motif at 126-151 is the NAP1L motif element; it reads YEPTEEECEWKVDEEEDISGDLKDKA. Positions 145–165 are enriched in basic and acidic residues; sequence GDLKDKAKLEEEKKDEEKEDP. A Nuclear localization signal motif is present at residues 274 to 280; the sequence is IKKKQKH. A compositionally biased stretch (acidic residues) spans 347-378; sequence AIEDDDDDYDEEGEEADDEEGEEEADEDNDPD. Positions 347–393 are disordered; it reads AIEDDDDDYDEEGEEADDEEGEEEADEDNDPDYEPKKDQNPAECKQQ. A compositionally biased stretch (basic and acidic residues) spans 379–393; the sequence is YEPKKDQNPAECKQQ.

It belongs to the nucleosome assembly protein (NAP) family. Forms homomultimers. Interacts with histone B4. Interacts with the B-type cyclins ccnb1 and ccnb2. In terms of processing, phosphorylated by cyclin B-cdc2 kinase complexes.

It is found in the cytoplasm. The protein resides in the nucleus. In terms of biological role, acts as a chaperone for the linker histone to facilitate deposition of histone B4 onto linker DNA. Required for both remodeling of sperm chromatin into nucleosomes, and linker histone binding to nucleosome core dimers. Plays a role in tissue-specific gene regulation. Required for primitive hemopoiesis, acting upstream of tal1/scl. In Xenopus tropicalis (Western clawed frog), this protein is Nucleosome assembly protein 1-like 1.